We begin with the raw amino-acid sequence, 312 residues long: MSLKIQTSNVTNKNDPKSINSRVFIGNLNTAVVKKSDVETIFSKYGRVAGCSVHKGYAFVQYANERHARAAVLGENGRVLAGQTLDINMAGEPKPNRPKGLKRAATAIYSGYSFDYDYYQDYFCARLFDYRGRLSPVPVPRAVPVKRPRVTVPLVRRVKTTIPVKLFARSTAVTTGSAKIKLKSSELQTIKTELTQIKSNIDALLGRLEQIAEEQKANPDGKKKGDSSSGGGGGSSGGGGSSNVGGGSSGGSGSCSSSSRLPAPQEDTASEAGTPQGEVQTRDDGDEEGLLTHSEEELEHSQDTDAEDGALQ.

At S2 the chain carries N-acetylserine. K4 is covalently cross-linked (Glycyl lysine isopeptide (Lys-Gly) (interchain with G-Cter in SUMO2)). One can recognise an RRM domain in the interval S21–E92. At K44 the chain carries N6-acetyllysine. Glycyl lysine isopeptide (Lys-Gly) (interchain with G-Cter in SUMO2) cross-links involve residues K94 and K99. S135 bears the Phosphoserine mark. A Glycyl lysine isopeptide (Lys-Gly) (interchain with G-Cter in SUMO2) cross-link involves residue K159. N6-acetyllysine; alternate is present on K165. A Glycyl lysine isopeptide (Lys-Gly) (interchain with G-Cter in SUMO2); alternate cross-link involves residue K165. Residues K179 and K191 each participate in a glycyl lysine isopeptide (Lys-Gly) (interchain with G-Cter in SUMO2) cross-link. A coiled-coil region spans residues S184–K216. A compositionally biased stretch (basic and acidic residues) spans E214 to D226. The tract at residues E214–Q312 is disordered. Positions S228–G253 are enriched in gly residues. T268 is subject to Phosphothreonine. S270 carries the post-translational modification Phosphoserine. T274 and T292 each carry phosphothreonine. A compositionally biased stretch (basic and acidic residues) spans H293–D303. Residues S294 and S301 each carry the phosphoserine modification. Phosphothreonine is present on T304.

The protein belongs to the RRM HNRPC family. RALY subfamily. In terms of assembly, identified in the spliceosome C complex. Interacts (through its RNA-binding domain) with FUS (through its RNA-binding domain); both are components of the same RNPs. Widely expressed. Expressed in brain, testis, lung, spleen and kidney. Weakly expressed in liver.

It is found in the nucleus. RNA-binding protein that acts as a transcriptional cofactor for cholesterol biosynthetic genes in the liver. Binds the lipid-responsive non-coding RNA LeXis and is required for LeXis-mediated effect on cholesterogenesis. May be a heterogeneous nuclear ribonucleoprotein (hnRNP). The chain is RNA-binding protein Raly (Raly) from Mus musculus (Mouse).